A 297-amino-acid chain; its full sequence is Pyridoxal 5'-phosphate synthase subunit SNZ1 (297 aa).

Asp-23 lines the D-ribose 5-phosphate pocket. The Schiff-base intermediate with D-ribose 5-phosphate role is filled by Lys-80. Gly-152 is a D-ribose 5-phosphate binding site. Arg-164 contributes to the D-glyceraldehyde 3-phosphate binding site. Residues Gly-214 and 235–236 (GS) each bind D-ribose 5-phosphate.

Belongs to the PdxS/SNZ family. Homohexamer. Interacts with AIM18.

It carries out the reaction aldehydo-D-ribose 5-phosphate + D-glyceraldehyde 3-phosphate + L-glutamine = pyridoxal 5'-phosphate + L-glutamate + phosphate + 3 H2O + H(+). The protein operates within cofactor biosynthesis; pyridoxal 5'-phosphate biosynthesis. In terms of biological role, catalyzes the formation of pyridoxal 5'-phosphate from ribose 5-phosphate (RBP), glyceraldehyde 3-phosphate (G3P) and ammonia. The ammonia is provided by a SNO isoform. Can also use ribulose 5-phosphate and dihydroxyacetone phosphate as substrates, resulting from enzyme-catalyzed isomerization of RBP and G3P, respectively. This chain is Pyridoxal 5'-phosphate synthase subunit SNZ1 (SNZ1), found in Saccharomyces cerevisiae (strain ATCC 204508 / S288c) (Baker's yeast).